A 528-amino-acid chain; its full sequence is Chaperonin GroEL, chloroplastic (528 aa).

Residues 29–32, 86–90, Gly414, 480–482, and Asp496 contribute to the ATP site; these read TLGP, DGTTT, and DAA.

The protein belongs to the chaperonin (HSP60) family. As to quaternary structure, forms a cylinder of 14 subunits composed of two heptameric rings stacked back-to-back. Interacts with the co-chaperonin GroES.

The protein localises to the plastid. It localises to the chloroplast. It catalyses the reaction ATP + H2O + a folded polypeptide = ADP + phosphate + an unfolded polypeptide.. In terms of biological role, together with its co-chaperonin GroES, plays an essential role in assisting protein folding. The GroEL-GroES system forms a nano-cage that allows encapsulation of the non-native substrate proteins and provides a physical environment optimized to promote and accelerate protein folding. The sequence is that of Chaperonin GroEL, chloroplastic from Pyropia yezoensis (Susabi-nori).